The primary structure comprises 456 residues: MALIIAGERSGVGKTTTTLTLLAALKARQASVQSFKVGPDYIDPMFHRFVTGRDCRNLDPILTDEDYVQHCFQQHSQTADYTLVEGVMGLFDGLTGKTDTASTAHIARILNLPILLVLNCSSTARSIAAIAYGYQNFDSRLKIAGLVLNRVGSDRHLELLKDALEPLEIPILGVLRRQDEIQIPDRHLGLIPTSELPHLQSVIDRLAVLGQQCFDWNRLEPLLSNSDLNSTAFKSTTPSISLKSSVPIAIARDRAFNFYYADNFDLLRAAGAELIEWSPLQDRQLPAGVQGLYLGGGFPEVFAAELSDNLLARQAVQTAITQGIPCYAECGGLMYLRQHIIDFEQTQYPMVGAIAATAQMGSRLTLGYREATAQQASPLLQKGQVVWGHEFHRSSLREPIAQPLFQLQNFDGSLHYGEGYSQPNLHASYLHLHFGGKPWLIQNFLQACQQATALSR.

Positions 247-439 (PIAIARDRAF…LHLHFGGKPW (193 aa)) constitute a GATase cobBQ-type domain. Cysteine 330 (nucleophile) is an active-site residue.

It belongs to the CobB/CbiA family. The cofactor is Mg(2+).

It catalyses the reaction cob(II)yrinate + 2 L-glutamine + 2 ATP + 2 H2O = cob(II)yrinate a,c diamide + 2 L-glutamate + 2 ADP + 2 phosphate + 2 H(+). The protein operates within cofactor biosynthesis; adenosylcobalamin biosynthesis; cob(II)yrinate a,c-diamide from sirohydrochlorin (anaerobic route): step 10/10. Its function is as follows. Catalyzes the ATP-dependent amidation of the two carboxylate groups at positions a and c of cobyrinate, using either L-glutamine or ammonia as the nitrogen source. In Synechococcus sp. (strain ATCC 27144 / PCC 6301 / SAUG 1402/1) (Anacystis nidulans), this protein is Cobyrinate a,c-diamide synthase.